We begin with the raw amino-acid sequence, 365 residues long: MMKKNLMLIFGGVSFEHEISLRSAYGIYSALMKLDKYNLYPSFIDKITGIWYLLDSVPDAPELIKRDSSAIISLIPGCGIFVNDEDLEIDVVFPIVHGRTGEDGAIQGFLKMMDIPCVGAGILGSAISINKYFCKLLLKSFNIPLVPFIGFRKYDYFLDKEGIKKDIKQSLNYPVIVKPAMLGSSIGISIAYNDTQIEKCIEEAFEYDLTVVVEKFMKVREIECSVIGNEQIKIFTPGEIVVQDFVFYDYDAKYSTIPGNSVVFNIPARLDMKHLLDIKEYAFLTYKCLELRGMARIDFLIEKDTNLIYVNEINTIPGFTDISMFSKMCEHDGLDYESLVDNLVSLAFQSYAKRKERIDFKRLEN.

The 211-residue stretch at 135–345 folds into the ATP-grasp domain; it reads KLLLKSFNIP…YESLVDNLVS (211 aa). 168–223 is a binding site for ATP; that stretch reads KQSLNYPVIVKPAMLGSSIGISIAYNDTQIEKCIEEAFEYDLTVVVEKFMKVREIE. Residues Asp298, Glu312, and Asn314 each contribute to the Mg(2+) site.

Belongs to the D-alanine--D-alanine ligase family. It depends on Mg(2+) as a cofactor. Mn(2+) serves as cofactor.

The protein resides in the cytoplasm. The catalysed reaction is 2 D-alanine + ATP = D-alanyl-D-alanine + ADP + phosphate + H(+). It functions in the pathway cell wall biogenesis; peptidoglycan biosynthesis. In terms of biological role, cell wall formation. This chain is D-alanine--D-alanine ligase, found in Borrelia hermsii (strain HS1 / DAH).